The following is a 303-amino-acid chain: Glutathione transport system permease protein GsiD (303 aa).

6 helical membrane-spanning segments follow: residues 40–60 (AMTA…ARWI), 105–125 (LAAG…LGLL), 144–164 (LFAF…GSGI), 165–185 (ANVI…LVRG), 222–242 (IVVF…SLSF), and 266–286 (VIAP…VLAF). The ABC transmembrane type-1 domain occupies 101-290 (AQISLAAGVF…LTVLAFNLLG (190 aa)).

Belongs to the binding-protein-dependent transport system permease family. The complex is composed of two ATP-binding proteins (GsiA), two transmembrane proteins (GsiC and GsiD) and a solute-binding protein (GsiB).

It is found in the cell inner membrane. Part of the ABC transporter complex GsiABCD involved in glutathione import. Probably responsible for the translocation of the substrate across the membrane. This chain is Glutathione transport system permease protein GsiD, found in Shigella dysenteriae serotype 1 (strain Sd197).